We begin with the raw amino-acid sequence, 305 residues long: UPF0612 protein C337.02c (305 aa).

Coiled-coil stretches lie at residues 27–63 and 120–207; these read IERYERSVDSTLLEIDENKREALEKNILRKDRKMKYE and NDMN…DARS.

It belongs to the UPF0612 family.

This Schizosaccharomyces pombe (strain 972 / ATCC 24843) (Fission yeast) protein is UPF0612 protein C337.02c.